We begin with the raw amino-acid sequence, 374 residues long: CMP-N-acetylneuraminate-beta-1,4-galactoside alpha-2,3-sialyltransferase (374 aa).

The Cytoplasmic portion of the chain corresponds to 1-8 (MGLLVFVR). The helical; Signal-anchor for type II membrane protein transmembrane segment at 9–28 (NLLLALCLFLVLGFLYYSAW) threads the bilayer. Over 29-374 (KLHLLQWEDS…RVITDLSSGI (346 aa)) the chain is Lumenal. N-linked (GlcNAc...) asparagine glycans are attached at residues Asn79 and Asn170. A disulfide bridge links Cys159 with Cys313.

Belongs to the glycosyltransferase 29 family. In terms of processing, the soluble form derives from the membrane form by proteolytic processing. In terms of tissue distribution, found in all tissues tested. High expression found in brain, liver, kidney, colon, heart and lung.

The protein resides in the golgi apparatus. It is found in the golgi stack membrane. The protein localises to the secreted. It carries out the reaction a beta-D-galactosyl-(1-&gt;4)-N-acetyl-beta-D-glucosaminyl derivative + CMP-N-acetyl-beta-neuraminate = an N-acetyl-alpha-neuraminyl-(2-&gt;3)-beta-D-galactosyl-(1-&gt;4)-N-acetyl-beta-D-glucosaminyl derivative + CMP + H(+). It participates in protein modification; protein glycosylation. In terms of biological role, catalyzes the formation of the NeuAc-alpha-2,3-Gal-beta-1,4-GlcNAc-, NeuAc-alpha-2,3-Gal-beta-1,3-GlcNAc- and NeuAc-alpha-2,3-Gal-beta-1,3-GalNAc- sequences found in terminal carbohydrate groups of glycoproteins and glycolipids. The highest activity is toward Gal-beta-1,3-GlcNAc and the lowest toward Gal-beta-1,3-GalNAc. This is CMP-N-acetylneuraminate-beta-1,4-galactoside alpha-2,3-sialyltransferase (St3gal3) from Rattus norvegicus (Rat).